The sequence spans 467 residues: Mitogen-activated protein kinase kinase kinase 8 (467 aa).

Threonine 80 carries the phosphothreonine modification. Phosphoserine is present on residues serine 138 and serine 141. Residues 144 to 152 (VPRGAFGKV) and lysine 167 each bind ATP. Residues 146-388 (RGAFGKVYLA…AADLLKHEAL (243 aa)) form the Protein kinase domain. Aspartate 253 serves as the catalytic Proton acceptor. Position 290 is a phosphothreonine (threonine 290). 2 positions are modified to phosphoserine: serine 400 and serine 443.

The protein belongs to the protein kinase superfamily. STE Ser/Thr protein kinase family. MAP kinase kinase kinase subfamily. In terms of assembly, forms a ternary complex with NFKB1/p105 and TNIP2. Interacts with NFKB1; the interaction increases the stability of MAP3K8 but inhibits its MEK phosphorylation activity, whereas loss of interaction following LPS stimulation leads to its degradation. Interacts with CD40 and TRAF6; the interaction is required for ERK activation. Interacts with KSR2; the interaction inhibits ERK and NF-kappa-B activation. It depends on Mg(2+) as a cofactor. In terms of processing, autophosphorylated. As to expression, expressed in spleen, thymus, liver and lung.

It is found in the cytoplasm. The enzyme catalyses L-seryl-[protein] + ATP = O-phospho-L-seryl-[protein] + ADP + H(+). It carries out the reaction L-threonyl-[protein] + ATP = O-phospho-L-threonyl-[protein] + ADP + H(+). In terms of biological role, required for lipopolysaccharide (LPS)-induced, TLR4-mediated activation of the MAPK/ERK pathway in macrophages, thus being critical for production of the pro-inflammatory cytokine TNF-alpha (TNF) during immune responses. Involved in the regulation of T-helper cell differentiation and IFNG expression in T-cells. Involved in mediating host resistance to bacterial infection through negative regulation of type I interferon (IFN) production. Transduces CD40 and TNFRSF1A signals that activate ERK in B-cells and macrophages, and thus may play a role in the regulation of immunoglobulin production. May also play a role in the transduction of TNF signals that activate JNK and NF-kappa-B in some cell types. In adipocytes, activates MAPK/ERK pathway in an IKBKB-dependent manner in response to IL1B and TNF, but not insulin, leading to induction of lipolysis. Plays a role in the cell cycle. This chain is Mitogen-activated protein kinase kinase kinase 8 (Map3k8), found in Rattus norvegicus (Rat).